Here is a 377-residue protein sequence, read N- to C-terminus: Cyclin-I (377 aa).

A disordered region spans residues threonine 356–methionine 377. Over residues proline 367–methionine 377 the composition is skewed to pro residues.

This sequence belongs to the cyclin family.

The sequence is that of Cyclin-I (Ccni) from Mus musculus (Mouse).